Reading from the N-terminus, the 298-residue chain is Acetylglutamate kinase (298 aa).

Residues 69–70, arginine 91, and asparagine 196 contribute to the substrate site; that span reads GG.

It belongs to the acetylglutamate kinase family. ArgB subfamily.

The protein localises to the cytoplasm. The enzyme catalyses N-acetyl-L-glutamate + ATP = N-acetyl-L-glutamyl 5-phosphate + ADP. It participates in amino-acid biosynthesis; L-arginine biosynthesis; N(2)-acetyl-L-ornithine from L-glutamate: step 2/4. Catalyzes the ATP-dependent phosphorylation of N-acetyl-L-glutamate. The sequence is that of Acetylglutamate kinase from Rhodopseudomonas palustris (strain BisB18).